The following is a 510-amino-acid chain: MHSTNKSHNNSLANAWLKLGIISLGLGGLYSIILVVLRTPQLSSFFLNQRIFKSALIIHVNLSILIWLLSITASVWGNETSLRLVKRRGIFIPFGLLREIVTFYTFDRNDVLYIYPKLAFFATLLIAISPLAGYNTVTNNYIPMLANIVFILGLSLFGVTLLLYAINILYLFDWMKLNNLVNVTVFSTIIMFILSFVCFGWSYKSLQKIIQIIPIEIEFYYELLFWSGGHLLQFIYTQILIFIWVSLLRTITVRELKFQTFYLFILYLNFVFSILILFGHISYDIIDIAFKEFYTDHMKYLGGIAPILCLVGMVVELVLMSYRDKLVLLIYRLSTKSSKIKKDCITLSNHRTHSIIKTILLCSITLFLLGGLIAININDINLVIPAHYHGSIVGISIACMGYSYQTIIPLMDHDIHKTTKQYLITLSINWIKFAIYLLTFGQILHILGLAFSGIYGVMRKDPNSIVPMSSKLLMGMMGIGGLIAIVGGLMFVYICGKTMFFLKGMKLEYE.

Transmembrane regions (helical) follow at residues 17-37, 56-76, 111-131, 148-168, 180-200, 223-243, 261-281, 300-320, 355-375, 382-402, 434-454, and 472-492; these read LKLG…LVVL, LIIH…ASVW, VLYI…ISPL, IVFI…AINI, LVNV…VCFG, LLFW…LIFI, FYLF…FGHI, YLGG…LVLM, IIKT…LIAI, LVIP…CMGY, AIYL…FSGI, and LLMG…LMFV.

This sequence to A.aeolicus AQ_155.

It is found in the cell membrane. This is an uncharacterized protein from Rickettsia prowazekii (strain Madrid E).